The chain runs to 349 residues: Secretory carrier-associated membrane protein 3 (349 aa).

Positions methionine 1–threonine 90 are disordered. At methionine 1–threonine 168 the chain is on the cytoplasmic side. Serine 32 is modified (phosphoserine). A Phosphothreonine modification is found at threonine 37. Phosphotyrosine is present on residues tyrosine 41 and tyrosine 53. A compositionally biased stretch (pro residues) spans proline 49–alanine 68. Serine 74 and serine 78 each carry phosphoserine. A Phosphotyrosine modification is found at tyrosine 85. A Phosphoserine modification is found at serine 87. 4 helical membrane-spanning segments follow: residues methionine 169 to alanine 189, glycine 200 to tyrosine 220, phenylalanine 236 to isoleucine 256, and valine 277 to valine 297. Residues methionine 298–proline 349 are Cytoplasmic-facing. Residue lysine 315 forms a Glycyl lysine isopeptide (Lys-Gly) (interchain with G-Cter in SUMO1) linkage.

It belongs to the SCAMP family. As to quaternary structure, interacts with NEDD4 and NEDD4L and TSG101. Interacts with RNF126. Monoubiquitinated.

Its subcellular location is the membrane. Functionally, functions in post-Golgi recycling pathways. Acts as a recycling carrier to the cell surface. In Mus musculus (Mouse), this protein is Secretory carrier-associated membrane protein 3 (Scamp3).